The chain runs to 503 residues: Portal protein (503 aa).

Residues 463-503 are disordered; sequence EMNQYAEMQGNLLDDEGGDDDLEEDDPNAGAAESGGAGQVS. The span at 475–489 shows a compositional bias: acidic residues; the sequence is LDDEGGDDDLEEDDP.

Belongs to the SPP1-like portal protein family. As to quaternary structure, homododecamer. Has been seen as 13-mer and 14-mer multimer in experiments, but assembles as homododecamer in vivo. Interacts with the gp7 protein. Interacts with the connector proteins gp15; this interaction occurs at the end of the packaging when the terminase complex is replaced by the connector.

The protein localises to the virion. Forms the portal vertex of the capsid. This portal plays critical roles in head assembly, genome packaging, neck/tail attachment, and genome ejection. The portal protein multimerizes as a single ring-shaped homododecamer arranged around a central channel. Binds to the terminase subunits to form the packaging machine. Necessary to ensure correct procapsid size during capsid assembly. Once the capsid is packaged with the DNA, the terminase complex is substituted by the connector proteins gp15. In Bacillus phage SPP1 (Bacteriophage SPP1), this protein is Portal protein (6).